The chain runs to 182 residues: Isopentenyl-diphosphate Delta-isomerase (182 aa).

The Mn(2+) site is built by H25 and H32. Positions 30–164 (LLHLAFSSWL…PWAFSPWMVM (135 aa)) constitute a Nudix hydrolase domain. C67 is a catalytic residue. H69 provides a ligand contact to Mn(2+). E87 provides a ligand contact to Mg(2+). Mn(2+) is bound by residues E114 and E116. The active site involves E116.

This sequence belongs to the IPP isomerase type 1 family. Homodimer. The cofactor is Mg(2+). Requires Mn(2+) as cofactor.

The protein resides in the cytoplasm. The enzyme catalyses isopentenyl diphosphate = dimethylallyl diphosphate. Its pathway is isoprenoid biosynthesis; dimethylallyl diphosphate biosynthesis; dimethylallyl diphosphate from isopentenyl diphosphate: step 1/1. Functionally, catalyzes the 1,3-allylic rearrangement of the homoallylic substrate isopentenyl (IPP) to its highly electrophilic allylic isomer, dimethylallyl diphosphate (DMAPP). This chain is Isopentenyl-diphosphate Delta-isomerase, found in Escherichia coli O9:H4 (strain HS).